Here is a 135-residue protein sequence, read N- to C-terminus: Sex-regulated protein janus-A (135 aa).

Residue K37 coordinates substrate. The active-site Proton acceptor is H63. 104–106 (SQG) provides a ligand contact to substrate.

Belongs to the janus family.

Functionally, janA and janB regulate somatic sex differentiation. In Drosophila simulans (Fruit fly), this protein is Sex-regulated protein janus-A (janA).